A 119-amino-acid polypeptide reads, in one-letter code: Small ribosomal subunit protein bS6 (119 aa).

Residues 95-119 form a disordered region; that stretch reads AVTEPSPLAKGNEKREDRKESEDAE. The segment covering 105–119 has biased composition (basic and acidic residues); it reads GNEKREDRKESEDAE.

It belongs to the bacterial ribosomal protein bS6 family.

Functionally, binds together with bS18 to 16S ribosomal RNA. In Halorhodospira halophila (strain DSM 244 / SL1) (Ectothiorhodospira halophila (strain DSM 244 / SL1)), this protein is Small ribosomal subunit protein bS6.